The primary structure comprises 215 residues: SAGA complex/transcription factor TFIID complex subunit Taf10 (215 aa).

Positions 1 to 77 (MSDINNNEPA…SRERHGSNYV (77 aa)) are disordered. The segment covering 23 to 42 (GNNSMSVDEQPETSSTNLPT) has biased composition (polar residues). Over residues 58-73 (NNEDSPKSDDSRERHG) the composition is skewed to basic and acidic residues. Residues 58–203 (NNEDSPKSDD…VDDLSAALNE (146 aa)) enclose the Histone-fold domain.

It belongs to the TAF10 family. As to quaternary structure, component of the 1.8 MDa SAGA (Spt-Ada-Gcn5 acetyltransferase) complex, which is composed of 19 subunits tra1, spt7, taf5, ngg1/ada3, sgf73, spt20, spt8, taf12, taf6, hfi1/ada1, ubp8, gcn5, ada2, spt3, sgf29, taf10, taf9, sgf11 and sus1. The SAGA complex is composed of 4 modules, namely the HAT (histone acetyltransferase) module (gcn5, ada2, ngg1/ada3 and sgf29), the DUB (deubiquitinating) module (ubp8, sgf11, sgf73 and sus1), the core or TAF (TBP-associated factor) module (taf5, taf6, taf9, taf10 and taf12), and the Tra1 or SPT (Suppressor of Ty) module (tra1, hfi1/ada1, spt3, spt7, spt8 and spt20). The Tra1/SPT module binds activators, the core module recruits TBP (TATA-binding protein), the HAT module contains the histone H3 acetyltransferase gcn5, and the DUB module comprises the histone H2B deubiquitinase ubp8. Component of the 1.2 MDa TFIID complex, which is composed of TATA-binding protein (TBP) and the 14 TBP-associated factors (TAFs). It comprises 1 copy of each taf1, taf2, taf3, taf7, taf8, taf11, taf13, 2 copies of each taf4, taf5, taf6, taf9, taf10, taf12, and 3 copies of taf14. In TFIID, taf10 heterodimerizes with taf3 and taf8.

The protein localises to the nucleus. Functionally, functions as a component of both the DNA-binding general transcription initiation factor complex TFIID and the transcription coactivator SAGA complex. Binding of TFIID to a promoter (with or without TATA element) is the initial step in pre-initiation complex (PIC) formation. TFIID plays a key role in the regulation of gene expression by RNA polymerase II through different activities such as transcription activator interaction, core promoter recognition and selectivity, TFIIA and TFIIB interaction, chromatin modification (histone acetylation by TAF1), facilitation of DNA opening and initiation of transcription. SAGA acts as a general cofactor required for essentially all RNA polymerase II transcription. At the promoters, SAGA is required for transcription pre-initiation complex (PIC) recruitment. It influences RNA polymerase II transcriptional activity through different activities such as TBP interaction (via core/TAF module) and promoter selectivity, interaction with transcription activators (via Tra1/SPT module), and chromatin modification through histone acetylation (via HAT module) and deubiquitination (via DUB module). SAGA preferentially acetylates histones H3 (to form H3K9ac, H3K14ac, H3K18ac and H3K23ac) and H2B and deubiquitinates histone H2B. SAGA interacts with DNA via upstream activating sequences (UASs). This is SAGA complex/transcription factor TFIID complex subunit Taf10 from Schizosaccharomyces pombe (strain 972 / ATCC 24843) (Fission yeast).